The following is a 275-amino-acid chain: Large ribosomal subunit protein uL2 (275 aa).

Disordered regions lie at residues 1–24 (MGIR…FSEI) and 208–275 (AGRT…RRRR). Over residues 12–22 (GTRQATVSDFS) the composition is skewed to polar residues. Composition is skewed to basic residues over residues 208 to 219 (AGRTRHLGRRPQ) and 255 to 275 (LGKK…RRRR).

Belongs to the universal ribosomal protein uL2 family. In terms of assembly, part of the 50S ribosomal subunit. Forms a bridge to the 30S subunit in the 70S ribosome.

In terms of biological role, one of the primary rRNA binding proteins. Required for association of the 30S and 50S subunits to form the 70S ribosome, for tRNA binding and peptide bond formation. It has been suggested to have peptidyltransferase activity; this is somewhat controversial. Makes several contacts with the 16S rRNA in the 70S ribosome. The protein is Large ribosomal subunit protein uL2 of Picosynechococcus sp. (strain ATCC 27264 / PCC 7002 / PR-6) (Agmenellum quadruplicatum).